The sequence spans 231 residues: NADH-ubiquinone oxidoreductase chain 4 (231 aa).

A run of 6 helical transmembrane segments spans residues proline 1–isoleucine 21, methionine 34–leucine 54, isoleucine 63–glycine 85, alanine 89–tyrosine 111, isoleucine 128–proline 148, and threonine 169–leucine 189.

The protein belongs to the complex I subunit 4 family.

It is found in the mitochondrion membrane. The catalysed reaction is a ubiquinone + NADH + 5 H(+)(in) = a ubiquinol + NAD(+) + 4 H(+)(out). Functionally, core subunit of the mitochondrial membrane respiratory chain NADH dehydrogenase (Complex I) that is believed to belong to the minimal assembly required for catalysis. Complex I functions in the transfer of electrons from NADH to the respiratory chain. The immediate electron acceptor for the enzyme is believed to be ubiquinone. The chain is NADH-ubiquinone oxidoreductase chain 4 (MT-ND4) from Lachesis muta muta (Bushmaster).